The primary structure comprises 261 residues: Acidic leucine-rich nuclear phosphoprotein 32 family member B (261 aa).

LRR repeat units lie at residues 16 to 40, 43 to 64, 65 to 87, and 89 to 110; these read PAAVRELVLDNCKSNDGKIEGLTAE, NLEFLSLINVGLISVSNLPKLP, KLKKLELSDNRICGGLDMLAEKL, and NLTHLNLSGNKLKDIGTLEPLK. The residue at position 86 (Lys86) is an N6-acetyllysine. One can recognise an LRRCT domain in the interval 123–161; the sequence is CEVTNLNDYRESVFKLLPQLTYLDGYDREDREAPDSDAE. A disordered region spans residues 149 to 261; the sequence is DREDREAPDS…RETDDEGEDD (113 aa). Residues 157-243 are compositionally biased toward acidic residues; that stretch reads DSDAEVDGVD…DEDEDEEEEE (87 aa). Ser158 is subject to Phosphoserine. Residues 244–254 show a composition bias toward basic and acidic residues; sequence SGKGEGRKRET. The residue at position 254 (Thr254) is a Phosphothreonine.

The protein belongs to the ANP32 family. In terms of assembly, monomer. Interacts with histones H3 and H4. Post-translationally, some glutamate residues are glycylated by TTLL8. This modification occurs exclusively on glutamate residues and results in a glycine chain on the gamma-carboxyl group.

It localises to the nucleus. Multifunctional protein working as a cell cycle progression factor as well as a cell survival factor. Required for the progression from the G1 to the S phase. Anti-apoptotic protein which functions as a caspase-3 inhibitor. Has no phosphatase 2A (PP2A) inhibitor activity. Exhibits histone chaperone properties, stimulating core histones to assemble into a nucleosome. The polypeptide is Acidic leucine-rich nuclear phosphoprotein 32 family member B (ANP32B) (Ovis aries (Sheep)).